The following is a 575-amino-acid chain: Cyclic nucleotide-gated channel alpha-4 (575 aa).

Residues 1 to 38 are Cytoplasmic-facing; the sequence is MSQDGKVKTTESTPPAPTKARKWLPVLDPSGDYYYWWL. A helical transmembrane segment spans residues 39–60; that stretch reads NTMVFPIMYNLIIVVCRACFPD. The Extracellular portion of the chain corresponds to 61 to 70; that stretch reads LQHSYLVAWF. The chain crosses the membrane as a helical span at residues 71–91; that stretch reads VLDYTSDLLYLLDIGVRFHTG. Residues 92-116 lie on the Cytoplasmic side of the membrane; sequence FLEQGILVVDKGMIASRYVRTWSFL. A helical membrane pass occupies residues 117-135; that stretch reads LDLASLVPTDAAYVQLGPH. The Extracellular portion of the chain corresponds to 136–140; that stretch reads IPTLR. A helical membrane pass occupies residues 141–159; that stretch reads LNRFLRVPRLFEAFDRTET. Residues 160 to 166 lie on the Cytoplasmic side of the membrane; sequence RTAYPNA. Residues 164 to 272 form an ion conduction pathway region; that stretch reads PNAFRIAKLM…GSMSSVIYNM (109 aa). The chain crosses the membrane as a helical span at residues 167 to 190; sequence FRIAKLMLYIFVVIHWNSCLYFAL. Topologically, residues 191 to 213 are extracellular; it reads SRYLGFGRDAWVYPDPAQPGFER. The next 2 helical transmembrane spans lie at 214-248 and 249-273; these read LRRQYLYSFYFSTLILTTVGDTPLPDREEEYLFMV and GDFLLAVMGFATIMGSMSSVIYNMN. A selectivity filter region spans residues 231 to 234; it reads TVGD. Residues 274 to 350 are C-linker; sequence TADAAFYPDH…STLSRVQIFQ (77 aa). At 274–575 the chain is on the cytoplasmic side; that stretch reads TADAAFYPDH…AGQAGPSGIE (302 aa). An IQ-type motif is present at residues 292 to 302; sequence LQHVNKRLERR. 348–471 lines the a nucleoside 3',5'-cyclic phosphate pocket; it reads IFQNCEASLL…AVMEEKGREI (124 aa). The tract at residues 354-474 is cyclic nucleotide-binding domain; sequence ASLLEELVLK…EEKGREILLK (121 aa). 3',5'-cyclic GMP is bound by residues Gly-414, Ser-417, Arg-430, and Thr-431. Residues Arg-430 and Thr-431 each contribute to the 3',5'-cyclic AMP site. A coiled-coil region spans residues 493–547; that stretch reads TESRLKGLDQQLDDLQTKFARLLAELESSALKIAYRIERLEWQTREWPMPEDMGE. The tract at residues 537–575 is disordered; that stretch reads REWPMPEDMGEADDEAEPGEGTSKDGEGKAGQAGPSGIE. The span at 544 to 554 shows a compositional bias: acidic residues; sequence DMGEADDEAEP.

The protein belongs to the cyclic nucleotide-gated cation channel (TC 1.A.1.5) family. CNGA4 subfamily. In terms of assembly, the olfactory cyclic nucleotide-gated channel is an heterotetramer composed of CNGA2, CNGA4 and CNGB1b subunits with 2:1:1 stoichiometry. May form homomeric channels gated by nitric oxide. N-glycosylated. Olfactory neurons. Expressed in olfactory sensory cilia (at protein level).

The protein resides in the cell projection. It localises to the cilium membrane. The enzyme catalyses Ca(2+)(in) = Ca(2+)(out). The catalysed reaction is Na(+)(in) = Na(+)(out). It carries out the reaction K(+)(in) = K(+)(out). It catalyses the reaction NH4(+)(in) = NH4(+)(out). The enzyme catalyses Rb(+)(in) = Rb(+)(out). The catalysed reaction is Li(+)(in) = Li(+)(out). It carries out the reaction Cs(+)(in) = Cs(+)(out). Its activity is regulated as follows. Ca(2+)-calmodulin exerts its inhibitory effect in cAMP sensitivity by binding to IQ-like motif of CNGA4 and preferably binds to the channel in the closed state. Inhibition by PIP3 of the CNG channel probably occurs via CGNA2 binding. Ca(2+) currents are inhibited by pimozide, an L-type Ca(2+) channel blocker. In terms of biological role, pore-forming subunit of the olfactory cyclic nucleotide-gated channel. Operates in the cilia of olfactory sensory neurons where chemical stimulation of the odorant is converted to an electrical signal. Mediates odorant-induced cAMP-dependent Ca(2+) influx triggering neuron depolarization. The rise of intracellular Ca(2+) levels potentiates the olfactory response by activating Ca(2+)-dependent Cl(-) channels, but it also serves as a negative feedback signal to desensitize the channel for rapid adaptation to odorants. Conducts cAMP- and cGMP-gated ion currents, with permeability for monovalent and divalent cations. May conduct nitric oxide-gated Ca(2+) currents relevant to neurons of vomeronasal organ, a system involved in the perception of pheromones. In Rattus norvegicus (Rat), this protein is Cyclic nucleotide-gated channel alpha-4.